A 294-amino-acid chain; its full sequence is Probable 2-(5''-triphosphoribosyl)-3'-dephosphocoenzyme-A synthase (294 aa).

The protein belongs to the CitG/MdcB family.

It catalyses the reaction 3'-dephospho-CoA + ATP = 2'-(5''-triphospho-alpha-D-ribosyl)-3'-dephospho-CoA + adenine. This chain is Probable 2-(5''-triphosphoribosyl)-3'-dephosphocoenzyme-A synthase, found in Streptococcus pyogenes serotype M5 (strain Manfredo).